A 362-amino-acid polypeptide reads, in one-letter code: MLYDLAHPLAEQFFLFNLFRYITFRSGAACMTALIVSFLLGPALIRWLKSVQRGGQPIREDGPERHLLEKKGTPTMGGVLILAATGISTLLWTDLRNGYVWAVLLLTLGYGGIGFADDYLKLSKRNTKGLPGRVKLIGQAVIGLIAAIWIMSLTRDPLSTGLAIPLLKDVLIPLGFAFPLFGMLVAMGASNAVNLTDGLDGLAIVPTIIAAGVFALIAYLVGNHVFATYLQLNEVAGTGELTVFCSALIGAGLGFLWFNAPPARVFMGDTGSLALGGALGGVAIATKHEIVLAIVGGLFVVETISVIVQVFWYKRTGRRVFLMAPLHHHFEKKGWPESTIVIRFWIVSFILALAGLATLKIR.

A run of 10 helical transmembrane segments spans residues 28–48 (AACM…IRWL), 72–92 (GTPT…TLLW), 100–120 (VWAV…DDYL), 134–154 (VKLI…MSLT), 170–190 (VLIP…MGAS), 201–221 (GLAI…AYLV), 241–261 (LTVF…FNAP), 265–285 (VFMG…VAIA), 290–310 (IVLA…IVQV), and 339–359 (TIVI…LATL).

This sequence belongs to the glycosyltransferase 4 family. MraY subfamily. It depends on Mg(2+) as a cofactor.

It is found in the cell inner membrane. It catalyses the reaction UDP-N-acetyl-alpha-D-muramoyl-L-alanyl-gamma-D-glutamyl-meso-2,6-diaminopimeloyl-D-alanyl-D-alanine + di-trans,octa-cis-undecaprenyl phosphate = di-trans,octa-cis-undecaprenyl diphospho-N-acetyl-alpha-D-muramoyl-L-alanyl-D-glutamyl-meso-2,6-diaminopimeloyl-D-alanyl-D-alanine + UMP. The protein operates within cell wall biogenesis; peptidoglycan biosynthesis. In terms of biological role, catalyzes the initial step of the lipid cycle reactions in the biosynthesis of the cell wall peptidoglycan: transfers peptidoglycan precursor phospho-MurNAc-pentapeptide from UDP-MurNAc-pentapeptide onto the lipid carrier undecaprenyl phosphate, yielding undecaprenyl-pyrophosphoryl-MurNAc-pentapeptide, known as lipid I. This Granulibacter bethesdensis (strain ATCC BAA-1260 / CGDNIH1) protein is Phospho-N-acetylmuramoyl-pentapeptide-transferase.